The following is a 104-amino-acid chain: UPF0147 protein MK1586 (104 aa).

This sequence belongs to the UPF0147 family.

The polypeptide is UPF0147 protein MK1586 (Methanopyrus kandleri (strain AV19 / DSM 6324 / JCM 9639 / NBRC 100938)).